The chain runs to 156 residues: SsrA-binding protein (156 aa).

Belongs to the SmpB family.

The protein localises to the cytoplasm. Required for rescue of stalled ribosomes mediated by trans-translation. Binds to transfer-messenger RNA (tmRNA), required for stable association of tmRNA with ribosomes. tmRNA and SmpB together mimic tRNA shape, replacing the anticodon stem-loop with SmpB. tmRNA is encoded by the ssrA gene; the 2 termini fold to resemble tRNA(Ala) and it encodes a 'tag peptide', a short internal open reading frame. During trans-translation Ala-aminoacylated tmRNA acts like a tRNA, entering the A-site of stalled ribosomes, displacing the stalled mRNA. The ribosome then switches to translate the ORF on the tmRNA; the nascent peptide is terminated with the 'tag peptide' encoded by the tmRNA and targeted for degradation. The ribosome is freed to recommence translation, which seems to be the essential function of trans-translation. In Desulfitobacterium hafniense (strain DSM 10664 / DCB-2), this protein is SsrA-binding protein.